The sequence spans 431 residues: Adenylosuccinate synthetase (431 aa).

GTP is bound by residues 12–18 (GDEGKGK) and 40–42 (GHT). The active-site Proton acceptor is the aspartate 13. Mg(2+) is bound by residues aspartate 13 and glycine 40. IMP-binding positions include 13–16 (DEGK), 38–41 (NAGH), threonine 131, arginine 145, glutamine 225, threonine 240, and arginine 304. Histidine 41 acts as the Proton donor in catalysis. 300–306 (TVTGRKR) contacts substrate. GTP contacts are provided by residues arginine 306, 332 to 334 (KLD), and 414 to 416 (STS).

Belongs to the adenylosuccinate synthetase family. As to quaternary structure, homodimer. It depends on Mg(2+) as a cofactor.

Its subcellular location is the cytoplasm. It catalyses the reaction IMP + L-aspartate + GTP = N(6)-(1,2-dicarboxyethyl)-AMP + GDP + phosphate + 2 H(+). The protein operates within purine metabolism; AMP biosynthesis via de novo pathway; AMP from IMP: step 1/2. In terms of biological role, plays an important role in the de novo pathway of purine nucleotide biosynthesis. Catalyzes the first committed step in the biosynthesis of AMP from IMP. In Roseobacter denitrificans (strain ATCC 33942 / OCh 114) (Erythrobacter sp. (strain OCh 114)), this protein is Adenylosuccinate synthetase.